We begin with the raw amino-acid sequence, 516 residues long: Cytochrome P450 1A2 (516 aa).

Residue S69 is glycosylated (O-linked (GlcNAc) serine). F226 contributes to the substrate binding site. C458 is a binding site for heme.

This sequence belongs to the cytochrome P450 family. As to quaternary structure, interacts with PGRMC1; the interaction requires PGRMC1 homodimerization. Heme is required as a cofactor.

It localises to the endoplasmic reticulum membrane. It is found in the microsome membrane. The catalysed reaction is an organic molecule + reduced [NADPH--hemoprotein reductase] + O2 = an alcohol + oxidized [NADPH--hemoprotein reductase] + H2O + H(+). It carries out the reaction 17beta-estradiol + reduced [NADPH--hemoprotein reductase] + O2 = 2-hydroxy-17beta-estradiol + oxidized [NADPH--hemoprotein reductase] + H2O + H(+). The enzyme catalyses 17beta-estradiol + reduced [NADPH--hemoprotein reductase] + O2 = 4-hydroxy-17beta-estradiol + oxidized [NADPH--hemoprotein reductase] + H2O + H(+). It catalyses the reaction estrone + reduced [NADPH--hemoprotein reductase] + O2 = 2-hydroxyestrone + oxidized [NADPH--hemoprotein reductase] + H2O + H(+). The catalysed reaction is estrone + reduced [NADPH--hemoprotein reductase] + O2 = 4-hydroxyestrone + oxidized [NADPH--hemoprotein reductase] + H2O + H(+). It carries out the reaction cholesterol + reduced [NADPH--hemoprotein reductase] + O2 = 25-hydroxycholesterol + oxidized [NADPH--hemoprotein reductase] + H2O + H(+). The enzyme catalyses all-trans-retinol + reduced [NADPH--hemoprotein reductase] + O2 = all-trans-retinal + oxidized [NADPH--hemoprotein reductase] + 2 H2O + H(+). It catalyses the reaction all-trans-retinal + reduced [NADPH--hemoprotein reductase] + O2 = all-trans-retinoate + oxidized [NADPH--hemoprotein reductase] + H2O + 2 H(+). The catalysed reaction is (5Z,8Z,11Z,14Z)-eicosatetraenoate + reduced [NADPH--hemoprotein reductase] + O2 = (14R,15S)-epoxy-(5Z,8Z,11Z)-eicosatrienoate + oxidized [NADPH--hemoprotein reductase] + H2O + H(+). It carries out the reaction (5Z,8Z,11Z,14Z)-eicosatetraenoate + reduced [NADPH--hemoprotein reductase] + O2 = (14S,15R)-epoxy-(5Z,8Z,11Z)-eicosatrienoate + oxidized [NADPH--hemoprotein reductase] + H2O + H(+). The enzyme catalyses (5Z,8Z,11Z,14Z,17Z)-eicosapentaenoate + reduced [NADPH--hemoprotein reductase] + O2 = (17R,18S)-epoxy-(5Z,8Z,11Z,14Z)-eicosatetraenoate + oxidized [NADPH--hemoprotein reductase] + H2O + H(+). It catalyses the reaction (4Z,7Z,10Z,13Z,16Z,19Z)-docosahexaenoate + reduced [NADPH--hemoprotein reductase] + O2 = (19R,20S)-epoxy-(4Z,7Z,10Z,13Z,16Z)-docosapentaenoate + oxidized [NADPH--hemoprotein reductase] + H2O + H(+). The catalysed reaction is (5S)-hydroperoxy-(6E,8Z,11Z,14Z)-eicosatetraenoate = 5-oxo-(6E,8Z,11Z,14Z)-eicosatetraenoate + H2O. It carries out the reaction (12S)-hydroperoxy-(5Z,8Z,10E,14Z)-eicosatetraenoate = 12-oxo-(5Z,8Z,10E,14Z)-eicosatetraenoate + H2O. The enzyme catalyses (15S)-hydroperoxy-(5Z,8Z,11Z,13E)-eicosatetraenoate = 15-oxo-(5Z,8Z,11Z,13E)-eicosatetraenoate + H2O. It catalyses the reaction (13S)-hydroperoxy-(9Z,11E)-octadecadienoate = 13-oxo-(9Z,11E)-octadecadienoate + H2O. The catalysed reaction is (5Z,8Z,11Z,14Z)-eicosatetraenoate + reduced [NADPH--hemoprotein reductase] + O2 = 13-hydroxy-(5Z,8Z,11Z,14Z)-eicosatetraenoate + oxidized [NADPH--hemoprotein reductase] + H2O + H(+). It carries out the reaction (5Z,8Z,11Z,14Z)-eicosatetraenoate + reduced [NADPH--hemoprotein reductase] + O2 = 19-hydroxy-(5Z,8Z,11Z,14Z)-eicosatetraenoate + oxidized [NADPH--hemoprotein reductase] + H2O + H(+). The enzyme catalyses (9Z,12Z)-octadecadienoate + reduced [NADPH--hemoprotein reductase] + O2 = 11-hydroxy-(9Z,12Z)-octadecadienoate + oxidized [NADPH--hemoprotein reductase] + H2O + H(+). The protein operates within cofactor metabolism; retinol metabolism. It participates in steroid metabolism; cholesterol metabolism. Its pathway is lipid metabolism; arachidonate metabolism. Its function is as follows. A cytochrome P450 monooxygenase involved in the metabolism of various endogenous substrates, including fatty acids, steroid hormones and vitamins. Mechanistically, uses molecular oxygen inserting one oxygen atom into a substrate, and reducing the second into a water molecule, with two electrons provided by NADPH via cytochrome P450 reductase (NADPH--hemoprotein reductase). Catalyzes the hydroxylation of carbon-hydrogen bonds. Exhibits high catalytic activity for the formation of hydroxyestrogens from estrone (E1) and 17beta-estradiol (E2), namely 2-hydroxy E1 and E2. Metabolizes cholesterol toward 25-hydroxycholesterol, a physiological regulator of cellular cholesterol homeostasis. May act as a major enzyme for all-trans retinoic acid biosynthesis in the liver. Catalyzes two successive oxidative transformation of all-trans retinol to all-trans retinal and then to the active form all-trans retinoic acid. Primarily catalyzes stereoselective epoxidation of the last double bond of polyunsaturated fatty acids (PUFA), displaying a strong preference for the (R,S) stereoisomer. Catalyzes bisallylic hydroxylation and omega-1 hydroxylation of PUFA. May also participate in eicosanoids metabolism by converting hydroperoxide species into oxo metabolites (lipoxygenase-like reaction, NADPH-independent). Plays a role in the oxidative metabolism of xenobiotics. Catalyzes the N-hydroxylation of heterocyclic amines and the O-deethylation of phenacetin. Metabolizes caffeine via N3-demethylation. In Callithrix jacchus (White-tufted-ear marmoset), this protein is Cytochrome P450 1A2 (CYP1A2).